A 454-amino-acid chain; its full sequence is Prenyltransferase nscD (454 aa).

The protein belongs to the tryptophan dimethylallyltransferase family.

The protein operates within secondary metabolite biosynthesis. Prenyltransferase; part of the gene cluster that mediates the biosynthesis of neosartoricin, a prenylated anthracenone that exhibits T-cell antiproliferative activity, suggestive of a physiological role as an immunosuppressive agent. The non-reducing polyketide synthase nscA probably synthesizes and cyclizes the decaketide backbone. The hydrolase nscB then mediates the product release through hydrolysis followed by spontaneous decarboxylation. The prenyltransferase nscD catalyzes the addition of the dimethylallyl group to the aromatic C5. The FAD-dependent monooxygenase nscC is then responsible for the stereospecific hydroxylation at C2. There is no gene encoding O-acetyltransferase in the nsc gene cluster; thus, the last step of 2-O-acetylation leading to neosartoricin may be catalyzed by an unidentified O-acetyltransferase. This chain is Prenyltransferase nscD, found in Neosartorya fischeri (strain ATCC 1020 / DSM 3700 / CBS 544.65 / FGSC A1164 / JCM 1740 / NRRL 181 / WB 181) (Aspergillus fischerianus).